The primary structure comprises 500 residues: NADH-quinone oxidoreductase subunit N (500 aa).

The next 14 helical transmembrane spans lie at 6 to 26, 40 to 60, 69 to 89, 106 to 125, 129 to 151, 164 to 184, 207 to 227, 239 to 259, 276 to 296, 302 to 322, 337 to 357, 380 to 400, 417 to 437, and 464 to 484; these read SWIA…IALV, ALTL…ALGG, MVVV…ALMI, GGEF…VMIS, FLVL…ALRR, FVLG…LYGA, LVFG…AVPF, PTAV…AMTI, MLAL…VAQT, LAFS…AGVV, MFYA…ILLL, YAGV…LVGF, SYLV…FYYL, and IVLA…SSLM.

The protein belongs to the complex I subunit 2 family. As to quaternary structure, NDH-1 is composed of 14 different subunits. Subunits NuoA, H, J, K, L, M, N constitute the membrane sector of the complex.

The protein resides in the cell inner membrane. The enzyme catalyses a quinone + NADH + 5 H(+)(in) = a quinol + NAD(+) + 4 H(+)(out). Functionally, NDH-1 shuttles electrons from NADH, via FMN and iron-sulfur (Fe-S) centers, to quinones in the respiratory chain. The immediate electron acceptor for the enzyme in this species is believed to be ubiquinone. Couples the redox reaction to proton translocation (for every two electrons transferred, four hydrogen ions are translocated across the cytoplasmic membrane), and thus conserves the redox energy in a proton gradient. This chain is NADH-quinone oxidoreductase subunit N, found in Polaromonas naphthalenivorans (strain CJ2).